The chain runs to 479 residues: Ribosomal RNA small subunit methyltransferase F (479 aa).

S-adenosyl-L-methionine contacts are provided by residues 125-131 (AAAPGSK), Glu149, Asp176, and Asp194. The active-site Nucleophile is Cys247.

Belongs to the class I-like SAM-binding methyltransferase superfamily. RsmB/NOP family.

Its subcellular location is the cytoplasm. It catalyses the reaction cytidine(1407) in 16S rRNA + S-adenosyl-L-methionine = 5-methylcytidine(1407) in 16S rRNA + S-adenosyl-L-homocysteine + H(+). Its function is as follows. Specifically methylates the cytosine at position 1407 (m5C1407) of 16S rRNA. The protein is Ribosomal RNA small subunit methyltransferase F of Escherichia coli O139:H28 (strain E24377A / ETEC).